The sequence spans 157 residues: SsrA-binding protein (157 aa).

The span at 135 to 151 (DKRETEKKRDWSREKGR) shows a compositional bias: basic and acidic residues. Residues 135–157 (DKRETEKKRDWSREKGRLLRARG) form a disordered region.

The protein belongs to the SmpB family.

The protein resides in the cytoplasm. In terms of biological role, required for rescue of stalled ribosomes mediated by trans-translation. Binds to transfer-messenger RNA (tmRNA), required for stable association of tmRNA with ribosomes. tmRNA and SmpB together mimic tRNA shape, replacing the anticodon stem-loop with SmpB. tmRNA is encoded by the ssrA gene; the 2 termini fold to resemble tRNA(Ala) and it encodes a 'tag peptide', a short internal open reading frame. During trans-translation Ala-aminoacylated tmRNA acts like a tRNA, entering the A-site of stalled ribosomes, displacing the stalled mRNA. The ribosome then switches to translate the ORF on the tmRNA; the nascent peptide is terminated with the 'tag peptide' encoded by the tmRNA and targeted for degradation. The ribosome is freed to recommence translation, which seems to be the essential function of trans-translation. The chain is SsrA-binding protein from Rhodopseudomonas palustris (strain BisB5).